The chain runs to 110 residues: Translation initiation factor 1A 3 (110 aa).

The tract at residues 1-29 is disordered; the sequence is MIRKRQSGSNKSVSSGNNQEVTRVRTPRK. The span at 7 to 18 shows a compositional bias: low complexity; it reads SGSNKSVSSGNN. The S1-like domain maps to 22 to 96; sequence TRVRTPRKDR…SKADVIWKYT (75 aa).

Belongs to the eIF-1A family.

Seems to be required for maximal rate of protein biosynthesis. Enhances ribosome dissociation into subunits and stabilizes the binding of the initiator Met-tRNA(I) to 40 S ribosomal subunits. The protein is Translation initiation factor 1A 3 (eIF1A3) of Methanosarcina acetivorans (strain ATCC 35395 / DSM 2834 / JCM 12185 / C2A).